Here is a 546-residue protein sequence, read N- to C-terminus: Src substrate cortactin (546 aa).

The tract at residues 1 to 28 is disordered; that stretch reads MWKASAGHAVSITQDDGGADDWETDPDF. Acidic residues predominate over residues 17-28; sequence GGADDWETDPDF. 6 Cortactin repeats span residues 80-116, 117-153, 154-190, 191-227, 228-264, and 265-301; these read ASHGYGGKFGVEQDRMDRSAVGHEYQSKLSKHCSQVD, SVRGFGGKFGVQMDRVDQSAVGFEYQGKTEKHASQKD, YSSGFGGKYGVQADRVDKSAVGFDYQGKTEKHESQKD, YSKGFGGKYGIDKDKVDKSAVGFEYQGKTEKHESQKD, YVKGFGGKFGVQTDRQDKCALGWDHQEKLQLHESQKD, and YKTGFGGKFGVQSERQDSSAVGFDYKERLAKHESQQD. Lysine 87 and lysine 107 each carry N6-acetyllysine. Residue serine 113 is modified to Phosphoserine. An Omega-N-methylarginine modification is found at arginine 119. Residue lysine 124 is modified to N6-acetyllysine. Lysine 144 is subject to N6-acetyllysine; alternate. A Glycyl lysine isopeptide (Lys-Gly) (interchain with G-Cter in SUMO1); alternate cross-link involves residue lysine 144. Residue lysine 144 forms a Glycyl lysine isopeptide (Lys-Gly) (interchain with G-Cter in SUMO2); alternate linkage. Serine 150 is modified (phosphoserine). An N6-acetyllysine mark is found at lysine 152, lysine 161, and lysine 171. The residue at position 181 (lysine 181) is an N6-acetyllysine; alternate. Lysine 181 is covalently cross-linked (Glycyl lysine isopeptide (Lys-Gly) (interchain with G-Cter in SUMO1); alternate). Lysine 181 is covalently cross-linked (Glycyl lysine isopeptide (Lys-Gly) (interchain with G-Cter in SUMO2); alternate). Residues lysine 193 and lysine 198 each carry the N6-acetyllysine modification. Residue lysine 218 forms a Glycyl lysine isopeptide (Lys-Gly) (interchain with G-Cter in SUMO1) linkage. N6-acetyllysine is present on lysine 235. Serine 261 carries the phosphoserine modification. Position 272 is an N6-acetyllysine (lysine 272). Residue lysine 295 is modified to N6-acetyllysine; alternate. Residue lysine 295 forms a Glycyl lysine isopeptide (Lys-Gly) (interchain with G-Cter in SUMO2); alternate linkage. A Cortactin 7; truncated repeat occupies 302–324; sequence YAKGFGGKYGVQKDRMDKNASTF. N6-acetyllysine is present on residues lysine 304, lysine 309, lysine 314, and lysine 346. A coiled-coil region spans residues 348–401; sequence SNIRANFENLAKEREQEDRRKAEAERAQRMAKERQEQEEARRKLEEQARAKKQT. The segment at 355–424 is disordered; sequence ENLAKEREQE…PPSSPIYEDA (70 aa). Residues 357 to 396 show a composition bias toward basic and acidic residues; the sequence is LAKEREQEDRRKAEAERAQRMAKERQEQEEARRKLEEQAR. Threonine 401 is modified (phosphothreonine). 4 positions are modified to phosphoserine: serine 405, serine 407, serine 417, and serine 418. Tyrosine 421 and tyrosine 442 each carry phosphotyrosine. Serine 443 is subject to Phosphoserine. The residue at position 466 (tyrosine 466) is a Phosphotyrosine; by FAK1. Phosphotyrosine; by SRC occurs at positions 482 and 485. The 59-residue stretch at 488–546 folds into the SH3 domain; that stretch reads DLGITAIALYDYQAAGDDEISFDPDDIITNIEMIDDGWWRGVCKGRYGLFPANYVELRQ.

As to quaternary structure, part of a complex composed of NEDD9, AURKA and CTTN; within the complex NEDD9 acts as a scaffold protein and is required for complex formation. Interacts (via N-terminus) with NEDD9. Identified in a complex containing FGFR4, NCAM1, CDH2, PLCG1, FRS2, SRC, SHC1, GAP43 and CTTN. Forms a complex with ABL1 and MYLK. Interacts with SHANK2 and SHANK3 (via its SH3 domain). Interacts with PLXDC2 and SRCIN1. Interacts with SAMSN1 (via SH3 domain). Interacts (via SH3 domain) with ASAP1 (via Pro-rich region). Interacts (via SH3 domain) with DNM2. Interacts with ACTN1. Interacts with FER. Interacts with KCNA2 (via non-phosphorylated C-terminus). Interacts with FGD1. Interacts with ABL2. Interacts with CTTNBP2NL; this interaction may target CTTN to stress fibers. Interacts with CTTNBP2; this interaction may target CTTN at the cell cortex or dendritic spines. Interacts with KCNH1. Interacts (via SH3 domain) with DIP2A (via N-terminus); the interaction enhances CTTN acetylation and is required for proper synaptic transmission. Interacts with XIRP1 (via N-terminus); the interaction promotes CTTN localization to intercalated disks in cardiomyocytes. In terms of processing, acetylated. Post-translationally, phosphorylated by FER. Phosphorylated in response to FGR activation. Phosphorylation by SRC promotes MYLK binding. Phosphorylated on tyrosine residues in response to CHRM1 activation. Phosphorylated by PTK2/FAK1 in response to cell adhesion. Tyrosine phosphorylation in transformed cells may contribute to cellular growth regulation and transformation. Phosphorylated by PKN2 at both serine and threonine residues in a GTP-bound Rac1-dependent manner in hyaluronan-induced astrocytes and hence down-regulated CTTN ability to associate with filamentous actin. Expressed at intercalated disks in the heart (at protein level). Expressed in most tissues, except in B-lymphocytes or plasma cells.

The protein localises to the cytoplasm. The protein resides in the cytoskeleton. Its subcellular location is the cell projection. It is found in the lamellipodium. It localises to the ruffle. The protein localises to the dendrite. The protein resides in the cell membrane. Its subcellular location is the podosome. It is found in the cell junction. It localises to the focal adhesion. The protein localises to the membrane. The protein resides in the clathrin-coated pit. Its subcellular location is the dendritic spine. It is found in the cell cortex. It localises to the endoplasmic reticulum. In terms of biological role, contributes to the organization of the actin cytoskeleton and cell shape. Plays a role in the formation of lamellipodia and in cell migration. Plays a role in the regulation of neuron morphology, axon growth and formation of neuronal growth cones. Through its interaction with CTTNBP2, involved in the regulation of neuronal spine density. Plays a role in focal adhesion assembly and turnover. In complex with ABL1 and MYLK regulates cortical actin-based cytoskeletal rearrangement critical to sphingosine 1-phosphate (S1P)-mediated endothelial cell (EC) barrier enhancement. Plays a role in intracellular protein transport and endocytosis, and in modulating the levels of potassium channels present at the cell membrane. Plays a role in receptor-mediated endocytosis via clathrin-coated pits. Required for stabilization of KCNH1 channels at the cell membrane. The protein is Src substrate cortactin (Cttn) of Mus musculus (Mouse).